A 373-amino-acid polypeptide reads, in one-letter code: Enoyl-[acyl-carrier-protein] reductase, mitochondrial (373 aa).

Residues methionine 1 to aspartate 53 constitute a mitochondrion transit peptide. Lysine 61 is modified (N6-acetyllysine; alternate). Lysine 61 is modified (N6-succinyllysine; alternate). The active-site Proton donor is tyrosine 94. NADP(+) contacts are provided by residues asparagine 167, asparagine 193–valine 196, and arginine 216–arginine 218. An N6-acetyllysine; alternate mark is found at lysine 252 and lysine 267. Lysine 252 and lysine 267 each carry N6-succinyllysine; alternate. NADP(+) contacts are provided by residues tyrosine 285–methionine 288 and phenylalanine 310–leucine 312. At lysine 316 the chain carries N6-succinyllysine. Lysine 368 provides a ligand contact to NADP(+).

This sequence belongs to the zinc-containing alcohol dehydrogenase family. Quinone oxidoreductase subfamily. As to quaternary structure, homodimer. Isoform 2 interacts with PPARA in the nucleus and increases its activity. In terms of tissue distribution, highly expressed in skeletal and heart muscle. Expressed at lower level in placenta, liver, kidney and pancreas. Weakly or not expressed in lung.

It localises to the mitochondrion. The protein localises to the cytoplasm. It is found in the nucleus. The catalysed reaction is a 2,3-saturated acyl-[ACP] + NADP(+) = a (2E)-enoyl-[ACP] + NADPH + H(+). The enzyme catalyses (2E)-butenoyl-[ACP] + NADPH + H(+) = butanoyl-[ACP] + NADP(+). It carries out the reaction (2E)-hexenoyl-[ACP] + NADPH + H(+) = hexanoyl-[ACP] + NADP(+). It catalyses the reaction (2E)-octenoyl-[ACP] + NADPH + H(+) = octanoyl-[ACP] + NADP(+). The catalysed reaction is (2E)-decenoyl-[ACP] + NADPH + H(+) = decanoyl-[ACP] + NADP(+). The enzyme catalyses (2E)-dodecenoyl-[ACP] + NADPH + H(+) = dodecanoyl-[ACP] + NADP(+). It carries out the reaction (2E)-tetradecenoyl-[ACP] + NADPH + H(+) = tetradecanoyl-[ACP] + NADP(+). It catalyses the reaction (2E)-hexadecenoyl-[ACP] + NADPH + H(+) = hexadecanoyl-[ACP] + NADP(+). Functionally, catalyzes the NADPH-dependent reduction of trans-2-enoyl thioesters in mitochondrial fatty acid synthesis (fatty acid synthesis type II). Fatty acid chain elongation in mitochondria uses acyl carrier protein (ACP) as an acyl group carrier, but the enzyme accepts both ACP and CoA thioesters as substrates in vitro. Displays a preference for medium-chain over short- and long-chain substrates. May provide the octanoyl chain used for lipoic acid biosynthesis, regulating protein lipoylation and mitochondrial respiratory activity particularly in Purkinje cells. Involved in iron homeostasis; affecting Fe-S cluster assembly and ceramide metabolism. Required for proper morphology and bioenergetic functions of mitochondria. Required for maintenance of neurons. In Homo sapiens (Human), this protein is Enoyl-[acyl-carrier-protein] reductase, mitochondrial (MECR).